The following is a 560-amino-acid chain: Triacylglyceride transporter MSMEG_3069/MSMEI_2992 (560 aa).

14 helical membrane-spanning segments follow: residues 16-36 (LAVLLGALDTYVVITIIVDIM), 48-68 (QVTPIITGYLLGYIAAMPLLG), 78-98 (MLIQVGLAGFAVGSVVTALSS), 108-128 (IIQGSASGALLPVTLALAADL), 143-163 (AAQELGAVLGPMYGIALVWLF), 168-188 (AVFWVNVPLAVIAMVMIHFSL), 200-220 (VDVIGGVLLAIALGLTVVGLY), 229-249 (VLPSWGLPVLAGALVAAVAFF), 269-289 (PFLAALAASLCAGAALMVTLV), 307-327 (AFLLLRFLIALPIGALIGGWL), 336-356 (VVLIGLLIAAGGFVLISHWSV), 368-388 (FTLPVLDTDLAIVGLGLGLVI), 411-431 (VVVARMIGMLIGIAALGAWGF), and 477-497 (IFLSAAVVCVIGALLGLLISG). A beta-hairpin region spans residues 362 to 371 (RHNLGLFTLP). The disordered stretch occupies residues 519–560 (IDPYDAGDADDAPTEMLDLPTQVLSAPPSDPGDERPGRHRAP).

Belongs to the major facilitator superfamily. P55 (TC 2.A.1.3.34) family.

It is found in the cell inner membrane. With respect to regulation, resistance to ethidium bromide is inhibited by reserpine. Its function is as follows. In association with lipoprotein LprG transports triacyglycerides (TAG) across the inner cell membrane into the periplasm; TAG probably regulates lipid metabolism and growth regulation and plays a structural role in the outer membrane. TAG (and maybe other lipids) enters the central cavity of the P55 transporter from within the cell inner membrane via clefts on the cytoplasmic face of P55 between TM5-TM8 and TM2-TM11. From there the lipid is probably transferred to the hydrophobic cavity of LprG. Confers resistance to ethidium bromide, possibly acting as an efflux pump, requires LprG lipoprotein for normal function. Export of ethidium bromide can be complemented by the equivalent operon from M.tuberculosis (lprG-Rv1410c). Involved in drug susceptibilty, its expression alone partially complements the antibiotic susceptibilty of a double lprG-mfs deletion. Probably does not function as a bona fide drug efflux pump, but instead plays a role in outer membrane biogenesis. Probably required with LprG for normal surface localization of lipoarabinomannan (LAM). In Mycolicibacterium smegmatis (strain ATCC 700084 / mc(2)155) (Mycobacterium smegmatis), this protein is Triacylglyceride transporter MSMEG_3069/MSMEI_2992.